The following is an 84-amino-acid chain: U8-theraphotoxin-Hhn1c 2 (84 aa).

A signal peptide spans 1–21 (MKVVLLVCLVWMMAMMELVSC). Disulfide bonds link C23/C35, C29/C44, C34/C67, C54/C75, and C69/C81.

This sequence belongs to the AVIT (prokineticin) family. Expressed by the venom gland.

The protein resides in the secreted. The sequence is that of U8-theraphotoxin-Hhn1c 2 from Cyriopagopus hainanus (Chinese bird spider).